The primary structure comprises 469 residues: 3-isopropylmalate dehydratase large subunit (469 aa).

Residues cysteine 347, cysteine 410, and cysteine 413 each coordinate [4Fe-4S] cluster.

This sequence belongs to the aconitase/IPM isomerase family. LeuC type 1 subfamily. Heterodimer of LeuC and LeuD. It depends on [4Fe-4S] cluster as a cofactor.

It carries out the reaction (2R,3S)-3-isopropylmalate = (2S)-2-isopropylmalate. The protein operates within amino-acid biosynthesis; L-leucine biosynthesis; L-leucine from 3-methyl-2-oxobutanoate: step 2/4. Catalyzes the isomerization between 2-isopropylmalate and 3-isopropylmalate, via the formation of 2-isopropylmaleate. This Polynucleobacter necessarius subsp. necessarius (strain STIR1) protein is 3-isopropylmalate dehydratase large subunit.